We begin with the raw amino-acid sequence, 500 residues long: Autophagy-related protein 18 (500 aa).

One copy of the WD 1 repeat lies at 3 to 41 (DSSPTINFINFNQTGTCISLGTSKGFKIFNCEPFGKFYS). Positions 174–197 (VGGNTETSFKRDQQDAGHSDISDL) are disordered. The span at 181-194 (SFKRDQQDAGHSDI) shows a compositional bias: basic and acidic residues. WD repeat units lie at residues 243-283 (AHKG…KIYQ) and 288-327 (TYAT…SNNK). A L/FRRG motif motif is present at residues 284–288 (FRRGT). The segment at 328–358 (LDSDDSNMEEAAADDSSLDTTSIDALSDEEN) is disordered. The span at 331–344 (DDSNMEEAAADDSS) shows a compositional bias: acidic residues. Ser-354 carries the phosphoserine modification.

It belongs to the WD repeat PROPPIN family. In terms of assembly, component of the PI(3,5)P2 regulatory complex, composed of ATG18, FIG4, FAB1, VAC14 and VAC7. VAC14 nucleates the assembly of the complex and serves as a scaffold. Interacts with ATG2, ATG9 and VAC17. The ATG2-ATG18 complex is essential for autophagosome formation.

Its subcellular location is the preautophagosomal structure membrane. It localises to the vacuole membrane. It is found in the endosome membrane. Functionally, the PI(3,5)P2 regulatory complex regulates both the synthesis and turnover of phosphatidylinositol 3,5-bisphosphate (PtdIns(3,5)P2). May negatively regulate FAB1 activity by sequestering or masking VAC7 from FAB1. Necessary for proper vacuole morphology. Plays an important role in osmotically-induced vacuole fragmentation. Required for cytoplasm to vacuole transport (Cvt) vesicle formation, pexophagy and starvation-induced autophagy. Involved in correct ATG9 trafficking to the pre-autophagosomal structure. Might also be involved in premeiotic DNA replication. With ATG2, protects ATG8 from ARG4-mediated cleavage. The sequence is that of Autophagy-related protein 18 (ATG18) from Saccharomyces cerevisiae (strain YJM789) (Baker's yeast).